A 235-amino-acid chain; its full sequence is Aspartate/glutamate leucyltransferase (235 aa).

It belongs to the R-transferase family. Bpt subfamily.

It is found in the cytoplasm. The catalysed reaction is N-terminal L-glutamyl-[protein] + L-leucyl-tRNA(Leu) = N-terminal L-leucyl-L-glutamyl-[protein] + tRNA(Leu) + H(+). It carries out the reaction N-terminal L-aspartyl-[protein] + L-leucyl-tRNA(Leu) = N-terminal L-leucyl-L-aspartyl-[protein] + tRNA(Leu) + H(+). In terms of biological role, functions in the N-end rule pathway of protein degradation where it conjugates Leu from its aminoacyl-tRNA to the N-termini of proteins containing an N-terminal aspartate or glutamate. The sequence is that of Aspartate/glutamate leucyltransferase from Pseudomonas syringae pv. tomato (strain ATCC BAA-871 / DC3000).